The following is a 157-amino-acid chain: MNINLTMFGQLIMFTMFTWFCMKFVWPPIVMTMEERKKRIESGLLAAERGRSEQEEMQAKAQEMINQSKDQAAEIIANATRQASNMVEDAKDVALKEAGKVKAQAQAQLEQDTIQTRNELKNQMSDLIMQGVSVVLAKEVDVKVHQKMLGKLSQSLS.

The chain crosses the membrane as a helical span at residues 7–29 (MFGQLIMFTMFTWFCMKFVWPPI).

It belongs to the ATPase B chain family. As to quaternary structure, F-type ATPases have 2 components, F(1) - the catalytic core - and F(0) - the membrane proton channel. F(1) has five subunits: alpha(3), beta(3), gamma(1), delta(1), epsilon(1). F(0) has three main subunits: a(1), b(2) and c(10-14). The alpha and beta chains form an alternating ring which encloses part of the gamma chain. F(1) is attached to F(0) by a central stalk formed by the gamma and epsilon chains, while a peripheral stalk is formed by the delta and b chains.

It localises to the cell inner membrane. Its function is as follows. F(1)F(0) ATP synthase produces ATP from ADP in the presence of a proton or sodium gradient. F-type ATPases consist of two structural domains, F(1) containing the extramembraneous catalytic core and F(0) containing the membrane proton channel, linked together by a central stalk and a peripheral stalk. During catalysis, ATP synthesis in the catalytic domain of F(1) is coupled via a rotary mechanism of the central stalk subunits to proton translocation. Functionally, component of the F(0) channel, it forms part of the peripheral stalk, linking F(1) to F(0). In Ruthia magnifica subsp. Calyptogena magnifica, this protein is ATP synthase subunit b.